The sequence spans 180 residues: Large ribosomal subunit protein uL5 (180 aa).

The protein belongs to the universal ribosomal protein uL5 family. As to quaternary structure, part of the 50S ribosomal subunit; part of the 5S rRNA/L5/L18/L25 subcomplex. Contacts the 5S rRNA and the P site tRNA. Forms a bridge to the 30S subunit in the 70S ribosome.

In terms of biological role, this is one of the proteins that bind and probably mediate the attachment of the 5S RNA into the large ribosomal subunit, where it forms part of the central protuberance. In the 70S ribosome it contacts protein S13 of the 30S subunit (bridge B1b), connecting the 2 subunits; this bridge is implicated in subunit movement. Contacts the P site tRNA; the 5S rRNA and some of its associated proteins might help stabilize positioning of ribosome-bound tRNAs. In Xanthomonas euvesicatoria pv. vesicatoria (strain 85-10) (Xanthomonas campestris pv. vesicatoria), this protein is Large ribosomal subunit protein uL5.